Here is a 256-residue protein sequence, read N- to C-terminus: Enolase-phosphatase E1 (256 aa).

2 residues coordinate Mg(2+): Asp-14 and Glu-16. Substrate is bound by residues 142–143 (SS) and Lys-176. A Mg(2+)-binding site is contributed by Asp-201.

The protein belongs to the HAD-like hydrolase superfamily. MasA/MtnC family. As to quaternary structure, monomer. Mg(2+) serves as cofactor.

The protein localises to the cytoplasm. Its subcellular location is the nucleus. It catalyses the reaction 5-methylsulfanyl-2,3-dioxopentyl phosphate + H2O = 1,2-dihydroxy-5-(methylsulfanyl)pent-1-en-3-one + phosphate. It functions in the pathway amino-acid biosynthesis; L-methionine biosynthesis via salvage pathway; L-methionine from S-methyl-5-thio-alpha-D-ribose 1-phosphate: step 3/6. Its pathway is amino-acid biosynthesis; L-methionine biosynthesis via salvage pathway; L-methionine from S-methyl-5-thio-alpha-D-ribose 1-phosphate: step 4/6. Functionally, bifunctional enzyme that catalyzes the enolization of 2,3-diketo-5-methylthiopentyl-1-phosphate (DK-MTP-1-P) into the intermediate 2-hydroxy-3-keto-5-methylthiopentenyl-1-phosphate (HK-MTPenyl-1-P), which is then dephosphorylated to form the acireductone 1,2-dihydroxy-3-keto-5-methylthiopentene (DHK-MTPene). This is Enolase-phosphatase E1 from Drosophila melanogaster (Fruit fly).